A 485-amino-acid polypeptide reads, in one-letter code: Glutamyl-tRNA(Gln) amidotransferase subunit A (485 aa).

Active-site charge relay system residues include lysine 79 and serine 154. The Acyl-ester intermediate role is filled by serine 178.

The protein belongs to the amidase family. GatA subfamily. As to quaternary structure, heterotrimer of A, B and C subunits.

The enzyme catalyses L-glutamyl-tRNA(Gln) + L-glutamine + ATP + H2O = L-glutaminyl-tRNA(Gln) + L-glutamate + ADP + phosphate + H(+). Its function is as follows. Allows the formation of correctly charged Gln-tRNA(Gln) through the transamidation of misacylated Glu-tRNA(Gln) in organisms which lack glutaminyl-tRNA synthetase. The reaction takes place in the presence of glutamine and ATP through an activated gamma-phospho-Glu-tRNA(Gln). This Persephonella marina (strain DSM 14350 / EX-H1) protein is Glutamyl-tRNA(Gln) amidotransferase subunit A.